The chain runs to 246 residues: Dolichol-phosphate mannosyltransferase subunit 1 (246 aa).

GDP-alpha-D-mannose-binding residues include Pro-20, Tyr-22, Glu-24, Val-49, Asp-51, Asp-104, Ala-105, Asp-106, Arg-133, Arg-220, and Lys-226. Asp-106 contacts Mg(2+). Asp-106 lines the Mn(2+) pocket.

This sequence belongs to the glycosyltransferase 2 family. Component of the dolichol-phosphate mannose (DPM) synthase complex composed of DPMS1, DPMS2 and DPMS3; in the complex interacts directly with DPMS3. It depends on Mg(2+) as a cofactor. Mn(2+) is required as a cofactor. Ca(2+) serves as cofactor.

It localises to the endoplasmic reticulum membrane. It carries out the reaction a di-trans,poly-cis-dolichyl phosphate + GDP-alpha-D-mannose = a di-trans,poly-cis-dolichyl beta-D-mannosyl phosphate + GDP. It participates in protein modification; protein glycosylation. Functionally, transfers mannose from GDP-mannose to dolichol monophosphate to form dolichol phosphate mannose (Dol-P-Man) which is the mannosyl donor in pathways leading to N-glycosylation, glycosyl phosphatidylinositol membrane anchoring, and O-mannosylation of proteins; catalytic subunit of the dolichol-phosphate mannose (DPM) synthase complex. Plays a role in plant development and physiology, sensitivity to ammonium stress and endoplasmic reticulum stress response. The protein is Dolichol-phosphate mannosyltransferase subunit 1 of Arabidopsis thaliana (Mouse-ear cress).